The chain runs to 198 residues: Transcription factor elt-7 (198 aa).

A compositionally biased stretch (polar residues) spans 1 to 18 (MLPETTTLQPLPSVTTIM). The disordered stretch occupies residues 1 to 20 (MLPETTTLQPLPSVTTIMNE). Residues 143-167 (CSHCSTTTTTLWRKNDEGNLECNAC) form a GATA-type zinc finger.

The protein localises to the nucleus. Its function is as follows. Transcriptional activator that binds to the consensus sequence 5'-[AT]GATA[AG]-3'. Required for gut-specific differentiation, specifically acting with the GATA region-binding transcription factor elt-2 to control normal gene expression and promote normal formation of the intestine. May have a protective role in response to infection by Gram-negative bacteria such as P.aeruginosa. This is Transcription factor elt-7 from Caenorhabditis elegans.